The following is a 257-amino-acid chain: Pyridoxine 5'-phosphate synthase (257 aa).

Asparagine 12 is a 3-amino-2-oxopropyl phosphate binding site. Residue 14–15 participates in 1-deoxy-D-xylulose 5-phosphate binding; the sequence is DH. Arginine 23 is a 3-amino-2-oxopropyl phosphate binding site. Histidine 48 functions as the Proton acceptor in the catalytic mechanism. Arginine 50 and histidine 55 together coordinate 1-deoxy-D-xylulose 5-phosphate. The Proton acceptor role is filled by glutamate 75. A 1-deoxy-D-xylulose 5-phosphate-binding site is contributed by threonine 105. Residue histidine 199 is the Proton donor of the active site. 3-amino-2-oxopropyl phosphate-binding positions include glycine 200 and 221 to 222; that span reads GH.

It belongs to the PNP synthase family. In terms of assembly, homooctamer; tetramer of dimers.

The protein resides in the cytoplasm. It catalyses the reaction 3-amino-2-oxopropyl phosphate + 1-deoxy-D-xylulose 5-phosphate = pyridoxine 5'-phosphate + phosphate + 2 H2O + H(+). It functions in the pathway cofactor biosynthesis; pyridoxine 5'-phosphate biosynthesis; pyridoxine 5'-phosphate from D-erythrose 4-phosphate: step 5/5. Its function is as follows. Catalyzes the complicated ring closure reaction between the two acyclic compounds 1-deoxy-D-xylulose-5-phosphate (DXP) and 3-amino-2-oxopropyl phosphate (1-amino-acetone-3-phosphate or AAP) to form pyridoxine 5'-phosphate (PNP) and inorganic phosphate. In Xanthobacter autotrophicus (strain ATCC BAA-1158 / Py2), this protein is Pyridoxine 5'-phosphate synthase.